The primary structure comprises 282 residues: Tumor necrosis factor ligand superfamily member 6 (282 aa).

Residues 1–82 (MQQPFNYPYP…KKKRDHNAGL (82 aa)) lie on the Cytoplasmic side of the membrane. A disordered region spans residues 30–73 (FPCPASVPGRPGQRRPPPPPPPPPPPPTLLPSRPLPPLPPPSLK). A compositionally biased stretch (pro residues) spans 43-71 (RRPPPPPPPPPPPPTLLPSRPLPPLPPPS). The helical; Signal-anchor for type II membrane protein transmembrane segment at 83-103 (CLLVMFFMVLVALVGLGLGMF) threads the bilayer. The Extracellular portion of the chain corresponds to 104-282 (QLFHLQKELT…SKTFFGLYKL (179 aa)). A compositionally biased stretch (basic and acidic residues) spans 119-132 (ASQRHTESSLEKQI). A disordered region spans residues 119-140 (ASQRHTESSLEKQIGHPNLPSE). The THD domain maps to 146–282 (KVAHLTGKPN…SKTFFGLYKL (137 aa)). The N-linked (GlcNAc...) asparagine glycan is linked to N185. An intrachain disulfide couples C203 to C234. 2 N-linked (GlcNAc...) asparagine glycosylation sites follow: N251 and N261.

This sequence belongs to the tumor necrosis factor family. As to quaternary structure, homotrimer. Interacts with ARHGAP9, BAIAP2L1, BTK, CACNB3, CACNB4, CRK, DLG2, DNMBP, DOCK4, EPS8L3, FGR, FYB1, FYN, HCK, ITK, ITSN2, KALRN, LYN, MACC1, MIA, MPP4, MYO15A, NCF1, NCK1, NCK2, NCKIPSD, OSTF1, PIK3R1, PSTPIP1, RIMBP3C, SAMSN1, SH3GL3, SH3PXD2B, SH3PXD2A, SH3RF2, SKAP2, SNX33, SNX9, SORBS3, SPTA1, SRC, SRGAP1, SRGAP2, SRGAP3, TEC, TJP3 and YES1. Post-translationally, the soluble form derives from the membrane form by proteolytic processing. The membrane-bound form undergoes two successive intramembrane proteolytic cleavages. The first one is processed by ADAM10 producing an N-terminal fragment, which lacks the receptor-binding extracellular domain. This ADAM10-processed FasL (FasL APL) remnant form is still membrane anchored and further processed by SPPL2A that liberates the FasL intracellular domain (FasL ICD). FasL shedding by ADAM10 is a prerequisite for subsequent intramembrane cleavage by SPPL2A in T-cells. Phosphorylated by FGR on tyrosine residues; this is required for ubiquitination and subsequent internalization. In terms of processing, N-glycosylated. Glycosylation enhances apoptotic activity. Post-translationally, monoubiquitinated.

The protein resides in the cell membrane. It is found in the cytoplasmic vesicle lumen. Its subcellular location is the lysosome lumen. The protein localises to the secreted. It localises to the nucleus. Functionally, cytokine that binds to TNFRSF6/FAS, a receptor that transduces the apoptotic signal into cells. Involved in cytotoxic T-cell-mediated apoptosis, natural killer cell-mediated apoptosis and in T-cell development. Initiates fratricidal/suicidal activation-induced cell death (AICD) in antigen-activated T-cells contributing to the termination of immune responses. TNFRSF6/FAS-mediated apoptosis also has a role in the induction of peripheral tolerance. Binds to TNFRSF6B/DcR3, a decoy receptor that blocks apoptosis. In terms of biological role, induces FAS-mediated activation of NF-kappa-B, initiating non-apoptotic signaling pathways. Can induce apoptosis but does not appear to be essential for this process. Cytoplasmic form induces gene transcription inhibition. The protein is Tumor necrosis factor ligand superfamily member 6 (FASLG) of Sus scrofa (Pig).